We begin with the raw amino-acid sequence, 368 residues long: MVKPTKSNIGVYTNPAHDLWVAEAEPSLEQVQTGEKLAPGEVTVAVKSTGICGSDVHFWHAGCIGPMIVEDDHILGHESAGVVVAVHENVKSLKVGDRVAIEPNIICGECEPCLTGRYNGCDSVLFRSTPPVPGLLRRYVNHPAMWCHKIGDMSYENGSLLEPLSVALAGVQRAEVRLGDPILVCGAGPIGLVTLACVKAAGAEPIIITDIDEGRLAFAKEFCPSVRTHKVDFKHTPEDFAKAITELGGGVEPAIALECTGVESSIAGAIQTVKFGGKVFVIGVGKNEIKIPFMRLSTREVDLQFQYRYANTWPRAIRLLQGGVINLEKLVTHRFKIEDALEAFKTAADPKTGAIKVQIQSFEEGESR.

Cys-52, His-77, Glu-78, Cys-107, Cys-110, Cys-113, Cys-121, and Glu-162 together coordinate Zn(2+). Positions 210, 215, and 282 each coordinate NAD(+).

Belongs to the zinc-containing alcohol dehydrogenase family. As to quaternary structure, homotetramer. The cofactor is Zn(2+).

It catalyses the reaction L-arabinitol + NAD(+) = L-xylulose + NADH + H(+). Its function is as follows. Plays a key role in liamocins biosynthesis by providing the arabinol moity that is linked to 3,5-dihydroxydecanoic acid (provided by the HR-PKS PKS1) via ester bond formation catalyzed by the esterase EST1. The sequence is that of L-arabinitol 4-dehydrogenase from Aureobasidium melanogenum (Aureobasidium pullulans var. melanogenum).